A 252-amino-acid chain; its full sequence is dITP/XTP pyrophosphatase (252 aa).

7–12 (THNEGK) is a substrate binding site. The Proton acceptor role is filled by aspartate 74. Aspartate 74 contributes to the Mg(2+) binding site. Substrate contacts are provided by residues serine 75 and 193–196 (FGYD). The tract at residues 201–224 (PDDQPAGRVSTEPDHEGEPLTSAE) is disordered. Substrate is bound by residues lysine 230 and 235–236 (HR).

Belongs to the HAM1 NTPase family. In terms of assembly, homodimer. It depends on Mg(2+) as a cofactor.

It carries out the reaction XTP + H2O = XMP + diphosphate + H(+). The enzyme catalyses dITP + H2O = dIMP + diphosphate + H(+). It catalyses the reaction ITP + H2O = IMP + diphosphate + H(+). Pyrophosphatase that catalyzes the hydrolysis of nucleoside triphosphates to their monophosphate derivatives, with a high preference for the non-canonical purine nucleotides XTP (xanthosine triphosphate), dITP (deoxyinosine triphosphate) and ITP. Seems to function as a house-cleaning enzyme that removes non-canonical purine nucleotides from the nucleotide pool, thus preventing their incorporation into DNA/RNA and avoiding chromosomal lesions. The protein is dITP/XTP pyrophosphatase of Bifidobacterium longum subsp. infantis (strain ATCC 15697 / DSM 20088 / JCM 1222 / NCTC 11817 / S12).